Here is a 240-residue protein sequence, read N- to C-terminus: MILLISDLHLQEERPDITRAFLDLLDGRARHAKALYILGDFFEAWIGDDAMTPFQRSICQALRQLSDSGTTIYLMHGNRDFLIGQAFCQAAGCTLLDDPSVIELGGEAVLLMHGDTLCTRDVGYMKLRRYLRNPLSLWILRHLPLSTRQKLARKLRSESKSQTRMKNTEIVDVTPDEVPKVMAAHGVRTLVHGHTHRPAIHKLVIDGQPARRIVLGDWDRRGWALQVDEQGFQLAPFEFS.

Mn(2+) is bound by residues D7, H9, D40, N78, and H113. 78–79 is a binding site for substrate; it reads NR. Positions 121, 159, 163, 166, and 194 each coordinate substrate. 2 residues coordinate Mn(2+): H194 and H196.

It belongs to the LpxH family. It depends on Mn(2+) as a cofactor.

It is found in the cell inner membrane. It carries out the reaction UDP-2-N,3-O-bis[(3R)-3-hydroxytetradecanoyl]-alpha-D-glucosamine + H2O = 2-N,3-O-bis[(3R)-3-hydroxytetradecanoyl]-alpha-D-glucosaminyl 1-phosphate + UMP + 2 H(+). Its pathway is glycolipid biosynthesis; lipid IV(A) biosynthesis; lipid IV(A) from (3R)-3-hydroxytetradecanoyl-[acyl-carrier-protein] and UDP-N-acetyl-alpha-D-glucosamine: step 4/6. In terms of biological role, hydrolyzes the pyrophosphate bond of UDP-2,3-diacylglucosamine to yield 2,3-diacylglucosamine 1-phosphate (lipid X) and UMP by catalyzing the attack of water at the alpha-P atom. Involved in the biosynthesis of lipid A, a phosphorylated glycolipid that anchors the lipopolysaccharide to the outer membrane of the cell. The chain is UDP-2,3-diacylglucosamine hydrolase from Pseudomonas entomophila (strain L48).